Here is a 298-residue protein sequence, read N- to C-terminus: Probable pyridoxal 5'-phosphate synthase subunit SNZ3 (298 aa).

D21 is a binding site for D-ribose 5-phosphate. Residue K78 is the Schiff-base intermediate with D-ribose 5-phosphate of the active site. D-ribose 5-phosphate-binding positions include G150, G213, and 234 to 235 (GS).

This sequence belongs to the PdxS/SNZ family. As to quaternary structure, homohexamer. Interacts with THI11.

It catalyses the reaction aldehydo-D-ribose 5-phosphate + D-glyceraldehyde 3-phosphate + L-glutamine = pyridoxal 5'-phosphate + L-glutamate + phosphate + 3 H2O + H(+). The protein operates within cofactor biosynthesis; pyridoxal 5'-phosphate biosynthesis. Catalyzes the formation of pyridoxal 5'-phosphate from ribose 5-phosphate (RBP), glyceraldehyde 3-phosphate (G3P) and ammonia. The ammonia is provided by a SNO isoform. Can also use ribulose 5-phosphate and dihydroxyacetone phosphate as substrates, resulting from enzyme-catalyzed isomerization of RBP and G3P, respectively. This is Probable pyridoxal 5'-phosphate synthase subunit SNZ3 (SNZ3) from Saccharomyces cerevisiae (strain ATCC 204508 / S288c) (Baker's yeast).